Here is a 1072-residue protein sequence, read N- to C-terminus: Carbamoyl phosphate synthase large chain (1072 aa).

Positions 1 to 401 are carboxyphosphate synthetic domain; sequence MPKRLDINTI…SLLKAVRSLE (401 aa). Arginine 129, arginine 169, glycine 175, glycine 176, lysine 208, isoleucine 210, glutamate 215, glycine 241, valine 242, histidine 243, glutamine 284, and glutamate 298 together coordinate ATP. The 195-residue stretch at 133-327 folds into the ATP-grasp 1 domain; it reads RTLMQELNEP…IAKLAAKIAV (195 aa). 3 residues coordinate Mg(2+): glutamine 284, glutamate 298, and asparagine 300. Mn(2+)-binding residues include glutamine 284, glutamate 298, and asparagine 300. The oligomerization domain stretch occupies residues 402-546; it reads LGIYHLELDH…YSTYADENES (145 aa). The carbamoyl phosphate synthetic domain stretch occupies residues 547-929; sequence IVTDRKSVVV…ALYKGLVASG (383 aa). The ATP-grasp 2 domain occupies 671–861; it reads EAALTKLGIP…MANVATKVIL (191 aa). Residues arginine 707, arginine 746, glutamate 752, glycine 777, valine 778, histidine 779, serine 780, glutamine 820, and glutamate 832 each coordinate ATP. Mg(2+)-binding residues include glutamine 820, glutamate 832, and asparagine 834. Positions 820, 832, and 834 each coordinate Mn(2+). The MGS-like domain occupies 930–1072; it reads INIPTHGSVI…QTKRHEVVHA (143 aa). The interval 930-1072 is allosteric domain; that stretch reads INIPTHGSVI…QTKRHEVVHA (143 aa).

It belongs to the CarB family. As to quaternary structure, composed of two chains; the small (or glutamine) chain promotes the hydrolysis of glutamine to ammonia, which is used by the large (or ammonia) chain to synthesize carbamoyl phosphate. Tetramer of heterodimers (alpha,beta)4. Mg(2+) is required as a cofactor. It depends on Mn(2+) as a cofactor.

It catalyses the reaction hydrogencarbonate + L-glutamine + 2 ATP + H2O = carbamoyl phosphate + L-glutamate + 2 ADP + phosphate + 2 H(+). The enzyme catalyses hydrogencarbonate + NH4(+) + 2 ATP = carbamoyl phosphate + 2 ADP + phosphate + 2 H(+). Its pathway is amino-acid biosynthesis; L-arginine biosynthesis; carbamoyl phosphate from bicarbonate: step 1/1. The protein operates within pyrimidine metabolism; UMP biosynthesis via de novo pathway; (S)-dihydroorotate from bicarbonate: step 1/3. Its function is as follows. Large subunit of the glutamine-dependent carbamoyl phosphate synthetase (CPSase). CPSase catalyzes the formation of carbamoyl phosphate from the ammonia moiety of glutamine, carbonate, and phosphate donated by ATP, constituting the first step of 2 biosynthetic pathways, one leading to arginine and/or urea and the other to pyrimidine nucleotides. The large subunit (synthetase) binds the substrates ammonia (free or transferred from glutamine from the small subunit), hydrogencarbonate and ATP and carries out an ATP-coupled ligase reaction, activating hydrogencarbonate by forming carboxy phosphate which reacts with ammonia to form carbamoyl phosphate. The polypeptide is Carbamoyl phosphate synthase large chain (Bacillus thuringiensis subsp. konkukian (strain 97-27)).